The chain runs to 311 residues: Probable dihydroorotate dehydrogenase A (fumarate) (311 aa).

Substrate contacts are provided by residues K45, 69 to 73, and N128; that span reads NSMGL. Residue 45-46 coordinates FMN; the sequence is KT. Residue N128 participates in FMN binding. The active-site Nucleophile is C131. FMN is bound by residues K165 and V193. A substrate-binding site is contributed by 194 to 195; sequence NS. FMN is bound by residues G220, 248–249, and 270–271; these read GG and GT.

It belongs to the dihydroorotate dehydrogenase family. Type 1 subfamily. In terms of assembly, homodimer. It depends on FMN as a cofactor.

Its subcellular location is the cytoplasm. It carries out the reaction (S)-dihydroorotate + fumarate = orotate + succinate. It functions in the pathway pyrimidine metabolism; UMP biosynthesis via de novo pathway. Functionally, catalyzes the conversion of dihydroorotate to orotate with fumarate as the electron acceptor. The sequence is that of Probable dihydroorotate dehydrogenase A (fumarate) (pyrDA) from Streptococcus pneumoniae (strain ATCC BAA-255 / R6).